The sequence spans 87 residues: Putative defensin-like protein 317 (87 aa).

A signal peptide spans 1-24 (MKSFLVAFLIVLVFFCVEMKIGNG). 3 disulfide bridges follow: Cys38–Cys71, Cys47–Cys80, and Cys56–Cys82.

Belongs to the DEFL family.

It is found in the secreted. The protein is Putative defensin-like protein 317 of Arabidopsis thaliana (Mouse-ear cress).